Consider the following 156-residue polypeptide: Iron sulfur cluster assembly protein 2, mitochondrial (156 aa).

The transit peptide at 1 to 26 (MFARLANPAHFKPLTGSHITRAAKRL) directs the protein to the mitochondrion.

It belongs to the NifU family. As to quaternary structure, component of the core Fe-S cluster (ISC) assembly machinery. Interacts with frataxin. Interacts with the mitochondrial co-chaperones JAC1 and SSQ1. Interacts with NFS1. Interacts with ferredoxin YAH1; interacts with the reduced form. It depends on [2Fe-2S] cluster as a cofactor.

It localises to the mitochondrion matrix. It participates in cofactor biosynthesis; iron-sulfur cluster biosynthesis. In terms of biological role, scaffold protein for the de novo synthesis of iron-sulfur (Fe-S) clusters within mitochondria, which is required for maturation of both mitochondrial and cytoplasmic [2Fe-2S] and [4Fe-4S] proteins. First, a [2Fe-2S] cluster is transiently assembled on the scaffold proteins ISU1 and ISU2. In a second step, the cluster is released from ISU1/ISU2, transferred to glutaredoxin GRX5, followed by the formation of mitochondrial [2Fe-2S] proteins, the synthesis of [4Fe-4S] clusters and their target-specific insertion into the recipient apoproteins. Cluster assembly on ISU1/ISU2 depends on the function of the cysteine desulfurase complex NFS1-ISD11, which serves as the sulfur donor for cluster synthesis, the iron-binding protein frataxin (YFH1) as the putative iron donor, and the electron transfer chain comprised of ferredoxin reductase ARH1 and ferredoxin YAH1, which receive their electrons from NADH. Fe-S cluster release from ISU1/ISU2 is achieved by interaction with the Hsp70 chaperone SSQ1, assisted by the DnaJ-like co-chaperone JAC1 and the nucleotide exchange factor MGE1. ISU1 is the major isoform in yeast, while ISU2 is not detectable in cells grown to stationary phase. Also involved in production of a sulfur precursor required for thiolation of cytoplasmic tRNAs. The polypeptide is Iron sulfur cluster assembly protein 2, mitochondrial (Saccharomyces cerevisiae (strain ATCC 204508 / S288c) (Baker's yeast)).